We begin with the raw amino-acid sequence, 412 residues long: Propionate kinase (412 aa).

It belongs to the acetokinase family. PduW subfamily.

Its subcellular location is the cytoplasm. It catalyses the reaction propanoate + ATP = propanoyl phosphate + ADP. It functions in the pathway polyol metabolism; 1,2-propanediol degradation. In terms of biological role, works with phosphate acetyltransferase (pta) to capture exogenous propionate and regenerate propionyl-CoA during degradation of 1,2-propanediol (1,2-PD). The protein is Propionate kinase of Yersinia enterocolitica serotype O:8 / biotype 1B (strain NCTC 13174 / 8081).